Consider the following 683-residue polypeptide: Translation factor guf1, mitochondrial (683 aa).

A mitochondrion-targeting transit peptide spans 1–43 (MRGCLQLARWLSAAPKGTAASLTRAPFVLANAPRFFTSSASHA). Positions 66–250 (ERYRNFCIVA…KIPAYGYFPV (185 aa)) constitute a tr-type G domain. GTP contacts are provided by residues 75–82 (AHVDHGKS), 139–143 (DTPGH), and 193–196 (NKVD).

It belongs to the TRAFAC class translation factor GTPase superfamily. Classic translation factor GTPase family. LepA subfamily.

It localises to the mitochondrion inner membrane. It carries out the reaction GTP + H2O = GDP + phosphate + H(+). Its function is as follows. Promotes mitochondrial protein synthesis. May act as a fidelity factor of the translation reaction, by catalyzing a one-codon backward translocation of tRNAs on improperly translocated ribosomes. Binds to mitochondrial ribosomes in a GTP-dependent manner. The polypeptide is Translation factor guf1, mitochondrial (guf1) (Neosartorya fischeri (strain ATCC 1020 / DSM 3700 / CBS 544.65 / FGSC A1164 / JCM 1740 / NRRL 181 / WB 181) (Aspergillus fischerianus)).